The primary structure comprises 346 residues: Structure-specific endonuclease subunit SLX1 (346 aa).

The region spanning 10–92 (ALYCVYILRS…TNPHTSLHIP (83 aa)) is the GIY-YIG domain. The segment at 238–296 (CVVCKEEIDPEEGGLHAVCSNEGCEGVGHLRCWGRYLLKSEEGGGEGAILPVGGRCPRC) adopts an SLX1-type zinc-finger fold. The segment covering 324–336 (KVKRKRAPRKKTA) has biased composition (basic residues). Residues 324 to 346 (KVKRKRAPRKKTAKTKETREEDG) are disordered. The segment covering 337–346 (KTKETREEDG) has biased composition (basic and acidic residues).

This sequence belongs to the SLX1 family. As to quaternary structure, forms a heterodimer with SLX4. Requires a divalent metal cation as cofactor.

The protein localises to the nucleus. In terms of biological role, catalytic subunit of the SLX1-SLX4 structure-specific endonuclease that resolves DNA secondary structures generated during DNA repair and recombination. Has endonuclease activity towards branched DNA substrates, introducing single-strand cuts in duplex DNA close to junctions with ss-DNA. The polypeptide is Structure-specific endonuclease subunit SLX1 (Podospora anserina (strain S / ATCC MYA-4624 / DSM 980 / FGSC 10383) (Pleurage anserina)).